A 307-amino-acid polypeptide reads, in one-letter code: Ribosomal RNA small subunit methyltransferase H (307 aa).

Residues 33 to 35 (GGY), Asp-51, Phe-78, Asp-96, and Gln-103 contribute to the S-adenosyl-L-methionine site.

Belongs to the methyltransferase superfamily. RsmH family.

Its subcellular location is the cytoplasm. It carries out the reaction cytidine(1402) in 16S rRNA + S-adenosyl-L-methionine = N(4)-methylcytidine(1402) in 16S rRNA + S-adenosyl-L-homocysteine + H(+). In terms of biological role, specifically methylates the N4 position of cytidine in position 1402 (C1402) of 16S rRNA. The sequence is that of Ribosomal RNA small subunit methyltransferase H from Rickettsia conorii (strain ATCC VR-613 / Malish 7).